The chain runs to 455 residues: tRNA modification GTPase MnmE (455 aa).

(6S)-5-formyl-5,6,7,8-tetrahydrofolate-binding residues include Arg-26, Glu-86, and Arg-125. The TrmE-type G domain occupies 222–376 (GLKTAIIGRP…VEEKINQIFF (155 aa)). Position 232 (Asn-232) interacts with K(+). Residues 232–237 (NVGKSS), 251–257 (TDIAGTT), and 276–279 (DTAG) contribute to the GTP site. Ser-236 is a Mg(2+) binding site. Residues Thr-251, Ile-253, and Thr-256 each contribute to the K(+) site. Position 257 (Thr-257) interacts with Mg(2+). Residue Lys-455 participates in (6S)-5-formyl-5,6,7,8-tetrahydrofolate binding.

The protein belongs to the TRAFAC class TrmE-Era-EngA-EngB-Septin-like GTPase superfamily. TrmE GTPase family. In terms of assembly, homodimer. Heterotetramer of two MnmE and two MnmG subunits. It depends on K(+) as a cofactor.

The protein resides in the cytoplasm. In terms of biological role, exhibits a very high intrinsic GTPase hydrolysis rate. Involved in the addition of a carboxymethylaminomethyl (cmnm) group at the wobble position (U34) of certain tRNAs, forming tRNA-cmnm(5)s(2)U34. The protein is tRNA modification GTPase MnmE of Lactococcus lactis subsp. cremoris (strain SK11).